The following is a 405-amino-acid chain: Acetylornithine aminotransferase 1 (405 aa).

Pyridoxal 5'-phosphate contacts are provided by residues 108–109 (GA) and Phe-141. Residue Arg-144 participates in N(2)-acetyl-L-ornithine binding. Position 226 to 229 (226 to 229 (DEVQ)) interacts with pyridoxal 5'-phosphate. At Lys-255 the chain carries N6-(pyridoxal phosphate)lysine. Thr-283 provides a ligand contact to N(2)-acetyl-L-ornithine. Thr-284 contributes to the pyridoxal 5'-phosphate binding site.

Belongs to the class-III pyridoxal-phosphate-dependent aminotransferase family. ArgD subfamily. As to quaternary structure, homodimer. It depends on pyridoxal 5'-phosphate as a cofactor.

Its subcellular location is the cytoplasm. The catalysed reaction is N(2)-acetyl-L-ornithine + 2-oxoglutarate = N-acetyl-L-glutamate 5-semialdehyde + L-glutamate. It participates in amino-acid biosynthesis; L-arginine biosynthesis; N(2)-acetyl-L-ornithine from L-glutamate: step 4/4. The sequence is that of Acetylornithine aminotransferase 1 from Pseudomonas syringae pv. tomato (strain ATCC BAA-871 / DC3000).